The following is a 385-amino-acid chain: Aliphatic amidase expression-regulating protein (385 aa).

As to quaternary structure, homodimer. Forms a complex with AmiR.

Its function is as follows. Negatively regulates the expression of the aliphatic amidase operon. AmiC functions by inhibiting the action of AmiR at the protein level. It exhibits protein kinase activity. This Pseudomonas aeruginosa (strain ATCC 15692 / DSM 22644 / CIP 104116 / JCM 14847 / LMG 12228 / 1C / PRS 101 / PAO1) protein is Aliphatic amidase expression-regulating protein (amiC).